We begin with the raw amino-acid sequence, 451 residues long: Adenylyltransferase and sulfurtransferase MOCS3 (451 aa).

Threonine 60 is modified (phosphothreonine). ATP is bound by residues glycine 99, aspartate 120, 127 to 131 (SNFHR), lysine 144, and 188 to 189 (DN). Residues cysteine 229 and cysteine 232 each coordinate Zn(2+). Residue cysteine 246 is the Glycyl thioester intermediate; for adenylyltransferase activity of the active site. Zn(2+) contacts are provided by cysteine 304 and cysteine 307. Residues 353–449 (QQQPHLLIDV…WTHKVDPSFP (97 aa)) form the Rhodanese domain. Cysteine 408 functions as the Cysteine persulfide intermediate; for sulfurtransferase activity in the catalytic mechanism.

This sequence in the N-terminal section; belongs to the HesA/MoeB/ThiF family. UBA4 subfamily. The cofactor is Zn(2+).

The protein resides in the cytoplasm. Its subcellular location is the cytosol. It carries out the reaction [molybdopterin-synthase sulfur-carrier protein]-C-terminal Gly-Gly + ATP + H(+) = [molybdopterin-synthase sulfur-carrier protein]-C-terminal Gly-Gly-AMP + diphosphate. The catalysed reaction is [molybdopterin-synthase sulfur-carrier protein]-C-terminal Gly-Gly-AMP + S-sulfanyl-L-cysteinyl-[cysteine desulfurase] + AH2 = [molybdopterin-synthase sulfur-carrier protein]-C-terminal-Gly-aminoethanethioate + L-cysteinyl-[cysteine desulfurase] + A + AMP + 2 H(+). Its pathway is tRNA modification; 5-methoxycarbonylmethyl-2-thiouridine-tRNA biosynthesis. It functions in the pathway cofactor biosynthesis; molybdopterin biosynthesis. Plays a central role in 2-thiolation of mcm(5)S(2)U at tRNA wobble positions of cytosolic tRNA(Lys), tRNA(Glu) and tRNA(Gln). Also essential during biosynthesis of the molybdenum cofactor. Acts by mediating the C-terminal thiocarboxylation of sulfur carriers URM1 and MOCS2A. Its N-terminus first activates URM1 and MOCS2A as acyl-adenylates (-COAMP), then the persulfide sulfur on the catalytic cysteine is transferred to URM1 and MOCS2A to form thiocarboxylation (-COSH) of their C-terminus. The reaction probably involves hydrogen sulfide that is generated from the persulfide intermediate and that acts as a nucleophile towards URM1 and MOCS2A. Subsequently, a transient disulfide bond is formed. Does not use thiosulfate as sulfur donor; NFS1 probably acting as a sulfur donor for thiocarboxylation reactions. The polypeptide is Adenylyltransferase and sulfurtransferase MOCS3 (Drosophila ananassae (Fruit fly)).